The primary structure comprises 448 residues: tRNA(Ile)-lysidine synthase (448 aa).

25-30 (SGGSDS) contacts ATP.

Belongs to the tRNA(Ile)-lysidine synthase family.

It localises to the cytoplasm. It carries out the reaction cytidine(34) in tRNA(Ile2) + L-lysine + ATP = lysidine(34) in tRNA(Ile2) + AMP + diphosphate + H(+). In terms of biological role, ligates lysine onto the cytidine present at position 34 of the AUA codon-specific tRNA(Ile) that contains the anticodon CAU, in an ATP-dependent manner. Cytidine is converted to lysidine, thus changing the amino acid specificity of the tRNA from methionine to isoleucine. This is tRNA(Ile)-lysidine synthase from Brucella melitensis biotype 2 (strain ATCC 23457).